The chain runs to 211 residues: Methylthioribulose-1-phosphate dehydratase (211 aa).

H105 and H107 together coordinate Zn(2+).

This sequence belongs to the aldolase class II family. MtnB subfamily. Requires Zn(2+) as cofactor.

The catalysed reaction is 5-(methylsulfanyl)-D-ribulose 1-phosphate = 5-methylsulfanyl-2,3-dioxopentyl phosphate + H2O. Its pathway is amino-acid biosynthesis; L-methionine biosynthesis via salvage pathway; L-methionine from S-methyl-5-thio-alpha-D-ribose 1-phosphate: step 2/6. Functionally, catalyzes the dehydration of methylthioribulose-1-phosphate (MTRu-1-P) into 2,3-diketo-5-methylthiopentyl-1-phosphate (DK-MTP-1-P). This is Methylthioribulose-1-phosphate dehydratase from Acidiphilium cryptum (strain JF-5).